A 785-amino-acid chain; its full sequence is MFSSMQILPLEAPPTDGKLGPLPPSQLTDQEVEERELQAEQNNSNLAPPAAVATHTRTIGIIHPPPDIRTIVEKTAQFVSKNGLEFEKRIIVSNEKNAKFNFLKSSDPYHAFYQHKLTEYRAQNKDGAQGTDDSDGTTDPQLDTGAADESEAGDTQPDLQAQFRIPSKPLEAPEPEKYTVRLPEGITGEELDIIKLTAQFVARNGKSFLTGLSNRENNNPQFHFMKPTHSMFTFFTSLVDAYSEVLMPPKDLKEKLRKSAADLTTVLERCLHRLEWDRSQEQQKKKEEDEKELERVQMAMIDWHDFVVVESIDFADEEDEELPPPMTLDEVIRRSKASAMEEDEIVEPGKEVEMEMDEEEVKLVAEGMRAANLEENVKIENVHDEEAPMRIVKNWKRPEDRIPTERDPTKVVISPITGELIPINEMSEHMRISLIDPKFKEQKDRMFAKIRETTLAQDDEIAKNIVGLARLRPDIFGTTEEEVSNAVKAEIEKKKDEQPKQVIWDGHTGSIGRTANQALSQNANGEEQGDGVYGDPNSFPGPAALPPPRPGVPIVRPLPPPPNLALNLPRPPPSAQYPGAPRPLGVPMMQPMHQQHQLTMPGPPGHPQMMMNRPPQMQPGMHVPPPPGSQFAHHMQIPRPYGQLPPSAMGMMQPPPMPGMAPPPPPEEAPPPLPEEPEAKRQKFDESALVPEDQFLAQHPGPATIRVSKPNENDGQFMEITVQSLSENVGSLKEKIAGEIQIPANKQKLSGKAGFLKDNMSLAHYNVGAGEILTLSLRERGGRKR.

Residue Met1 is modified to N-acetylmethionine. The tract at residues 1–42 (MFSSMQILPLEAPPTDGKLGPLPPSQLTDQEVEERELQAEQN) is disordered. An SURP motif 1 repeat occupies 71-113 (IVEKTAQFVSKNGLEFEKRIIVSNEKNAKFNFLKSSDPYHAFY). The interval 124-175 (NKDGAQGTDDSDGTTDPQLDTGAADESEAGDTQPDLQAQFRIPSKPLEAPEP) is disordered. One copy of the SURP motif 2 repeat lies at 193 to 235 (IIKLTAQFVARNGKSFLTGLSNRENNNPQFHFMKPTHSMFTFF). Disordered regions lie at residues 522 to 554 (NANG…GVPI) and 639 to 713 (RPYG…PNEN). Composition is skewed to pro residues over residues 543-554 (AALPPPRPGVPI) and 653-674 (QPPP…PPLP). Over residues 677-686 (PEAKRQKFDE) the composition is skewed to basic and acidic residues. Residues 707–782 (VSKPNENDGQ…LTLSLRERGG (76 aa)) enclose the Ubiquitin-like domain.

Component of splicing factor SF3A which is composed of three subunits.

It localises to the nucleus. The chain is Probable splicing factor 3A subunit 1 from Arabidopsis thaliana (Mouse-ear cress).